Consider the following 373-residue polypeptide: MGDWMIENKVRDVVKKLKPYVPGKSKEEIARAYGIKPEDIIKLGSNENPWGPSPKIKEKILDEIDKIHQYPEPVNPILMKELSKFLNVDEENIIVGGDGADEIIDTIFRTFVDDGDEVIIPIPTFTQYRVSATIHNAKIKYAKYDKEKDFKLNVESVLNNITDKTKVIFLCTPNNPTGNIIENRDVERVINETDALVVIDHAYIEYAKKEYDWTQKAPEYDNVIVLRTFSKVFGLAGMRVGYGVANKKIIDYMMRVKPIFSLTRLSQVCAITALRDREFFERCVRDGIKSREMLYNGLKKFKDIKVYPSEANYLLVELKTMKAKEFCEELLKRGVIVRDCTSFDGLGDNYVRVSIGTFEEVERFLKILEEIIS.

Lys-231 is subject to N6-(pyridoxal phosphate)lysine.

The protein belongs to the class-II pyridoxal-phosphate-dependent aminotransferase family. Histidinol-phosphate aminotransferase subfamily. Requires pyridoxal 5'-phosphate as cofactor.

The catalysed reaction is L-histidinol phosphate + 2-oxoglutarate = 3-(imidazol-4-yl)-2-oxopropyl phosphate + L-glutamate. It functions in the pathway amino-acid biosynthesis; L-histidine biosynthesis; L-histidine from 5-phospho-alpha-D-ribose 1-diphosphate: step 7/9. This chain is Histidinol-phosphate aminotransferase (hisC), found in Methanocaldococcus jannaschii (strain ATCC 43067 / DSM 2661 / JAL-1 / JCM 10045 / NBRC 100440) (Methanococcus jannaschii).